A 425-amino-acid polypeptide reads, in one-letter code: Sucrose-phosphatase 1 (425 aa).

Belongs to the sucrose phosphatase family. In terms of assembly, homodimer. It depends on Mg(2+) as a cofactor.

It catalyses the reaction sucrose 6(F)-phosphate + H2O = sucrose + phosphate. It participates in glycan biosynthesis; sucrose biosynthesis; sucrose from D-fructose 6-phosphate and UDP-alpha-D-glucose: step 2/2. Inhibited by EDTA. Functionally, catalyzes the final step of sucrose synthesis. The protein is Sucrose-phosphatase 1 (SPP1) of Nicotiana tabacum (Common tobacco).